Consider the following 330-residue polypeptide: Dof zinc finger protein DOF2.4 (330 aa).

Over residues 14–25 the composition is skewed to polar residues; the sequence is NWQQAPPSNYNH. Residues 14-70 are disordered; sequence NWQQAPPSNYNHDGTGASANGGHVLRPQLQPQQQPQQQPHPNGSGGGGGGGGGSIRA. A compositionally biased stretch (low complexity) spans 40–55; sequence PQLQPQQQPQQQPHPN. The span at 56–68 shows a compositional bias: gly residues; sequence GSGGGGGGGGGSI. The Dof-type zinc finger occupies 89–143; that stretch reads LKCPRCESTNTKFCYFNNYSLTQPRHFCKTCRRYWTRGGALRNVPVGGGCRRNRR. Zn(2+) is bound by residues Cys91, Cys94, Cys116, and Cys119. Disordered stretches follow at residues 133-165 and 255-276; these read PVGG…SFSS and QQSS…SANG. The segment covering 146–165 has biased composition (low complexity); the sequence is SNSNNNNNSTATSNNTSFSS. Residues 265 to 276 are compositionally biased toward polar residues; it reads EDSSNPNPSANG.

In terms of tissue distribution, specific to the vascular tissues. The PEAR proteins (e.g. DOF2.4, DOF5.1, DOF3.2, DOF1.1, DOF5.6 and DOF5.3) form a short-range concentration gradient that peaks at protophloem sieve elements (PSE).

The protein localises to the nucleus. It localises to the symplast. Transcription factor that binds specifically to a 5'-AA[AG]G-3' consensus core sequence. Probably involved in early processes for vascular development. The PEAR proteins (e.g. DOF2.4, DOF5.1, DOF3.2, DOF1.1, DOF5.6 and DOF5.3) activate gene expression that promotes radial growth of protophloem sieve elements. Triggers the transcription of HD-ZIP III genes, especially in the central domain of vascular tissue. This chain is Dof zinc finger protein DOF2.4, found in Arabidopsis thaliana (Mouse-ear cress).